The primary structure comprises 209 residues: Uridine kinase (209 aa).

12–19 provides a ligand contact to ATP; sequence GGSGSGKT.

Belongs to the uridine kinase family.

Its subcellular location is the cytoplasm. It carries out the reaction uridine + ATP = UMP + ADP + H(+). It catalyses the reaction cytidine + ATP = CMP + ADP + H(+). Its pathway is pyrimidine metabolism; CTP biosynthesis via salvage pathway; CTP from cytidine: step 1/3. It functions in the pathway pyrimidine metabolism; UMP biosynthesis via salvage pathway; UMP from uridine: step 1/1. This chain is Uridine kinase, found in Listeria innocua serovar 6a (strain ATCC BAA-680 / CLIP 11262).